The chain runs to 342 residues: Heat-inducible transcription repressor HrcA (342 aa).

Belongs to the HrcA family.

Functionally, negative regulator of class I heat shock genes (grpE-dnaK-dnaJ and groELS operons). Prevents heat-shock induction of these operons. This chain is Heat-inducible transcription repressor HrcA, found in Leptospira borgpetersenii serovar Hardjo-bovis (strain JB197).